Consider the following 313-residue polypeptide: Dihydroorotate dehydrogenase B (NAD(+)), catalytic subunit (313 aa).

FMN contacts are provided by residues S21 and 45–46 (KA). Residues K45 and 69–73 (NAIGL) contribute to the substrate site. N99 and N127 together coordinate FMN. Residue N127 coordinates substrate. The active-site Nucleophile is C130. FMN is bound by residues K165 and I191. 192–193 (NT) contributes to the substrate binding site. Residues G217, 243–244 (GG), and 265–266 (GT) contribute to the FMN site.

It belongs to the dihydroorotate dehydrogenase family. Type 1 subfamily. As to quaternary structure, heterotetramer of 2 PyrK and 2 PyrD type B subunits. It depends on FMN as a cofactor.

It is found in the cytoplasm. The enzyme catalyses (S)-dihydroorotate + NAD(+) = orotate + NADH + H(+). It participates in pyrimidine metabolism; UMP biosynthesis via de novo pathway; orotate from (S)-dihydroorotate (NAD(+) route): step 1/1. Catalyzes the conversion of dihydroorotate to orotate with NAD(+) as electron acceptor. The polypeptide is Dihydroorotate dehydrogenase B (NAD(+)), catalytic subunit (pyrD) (Geobacillus kaustophilus (strain HTA426)).